Reading from the N-terminus, the 485-residue chain is MTITPQNLIALLPLLIVGLTVVVVMLSIAWRRNHFLNATLSVIGLNAALVSLWFVGQAGAMDVTPLMRVDGFAMLYTGLVLLASLATCTFAYPWLEGYNDNKDEFYLLVLIAALGGILLANANHLASLFLGIELISLPLFGLVGYAFRQKRSLEASIKYTILSAAASSFLLFGMALVYAQSGDLSFVALGKNLGDGMLNEPLLLAGFGLMIVGLGFKLSLVPFHLWTPDVYQGAPAPVSTFLATASKIAIFGVVMRLFLYAPVGDSEAIRVVLAIIAFASIIFGNLMALSQTNIKRLLGYSSISHLGYLLVALIALQTGEMSMEAVGVYLAGYLFSSLGAFGVVSLMSSPYRGPDADSLFSYRGLFWHRPILAAVMTVMMLSLAGIPMTLGFIGKFYVLAVGVQAHLWWLVGAVVVGSAIGLYYYLRVAVSLYLHAPEQPGRDAPSNWQYSAGGIVVLISALLVLVLGIWPQPLISIVRLAMPLM.

Transmembrane regions (helical) follow at residues 8–28 (LIAL…MLSI), 35–55 (FLNA…LWFV), 71–91 (GFAM…CTFA), 105–125 (FYLL…ANHL), 127–147 (SLFL…GYAF), 159–179 (YTIL…LVYA), 203–223 (LLAG…LVPF), 235–255 (PAPV…GVVM), 271–291 (VVLA…ALSQ), 297–317 (LLGY…IALQ), 326–346 (VGVY…VVSL), 373–393 (AAVM…LGFI), 408–430 (WWLV…RVAV), and 455–475 (IVVL…QPLI).

The protein belongs to the complex I subunit 2 family. In terms of assembly, NDH-1 is composed of 13 different subunits. Subunits NuoA, H, J, K, L, M, N constitute the membrane sector of the complex.

Its subcellular location is the cell inner membrane. It carries out the reaction a quinone + NADH + 5 H(+)(in) = a quinol + NAD(+) + 4 H(+)(out). Its function is as follows. NDH-1 shuttles electrons from NADH, via FMN and iron-sulfur (Fe-S) centers, to quinones in the respiratory chain. The immediate electron acceptor for the enzyme in this species is believed to be ubiquinone. Couples the redox reaction to proton translocation (for every two electrons transferred, four hydrogen ions are translocated across the cytoplasmic membrane), and thus conserves the redox energy in a proton gradient. The chain is NADH-quinone oxidoreductase subunit N from Escherichia coli O7:K1 (strain IAI39 / ExPEC).